Reading from the N-terminus, the 486-residue chain is Methionine aminopeptidase 2-2 (486 aa).

Residues 1 to 10 show a composition bias toward basic and acidic residues; the sequence is MGSKSPEGHR. Positions 1 to 120 are disordered; that stretch reads MGSKSPEGHR…ALPATELKQT (120 aa). Positions 46-56 are enriched in acidic residues; that stretch reads GDDDDDEDAEE. Positions 93–108 are enriched in basic residues; that stretch reads KKKKRKKSNKKKKKTK. H238 serves as a coordination point for substrate. Positions 259, 270, and 339 each coordinate a divalent metal cation. Position 347 (H347) interacts with substrate. A divalent metal cation is bound by residues E372 and E467.

This sequence belongs to the peptidase M24A family. Methionine aminopeptidase eukaryotic type 2 subfamily. Co(2+) is required as a cofactor. It depends on Zn(2+) as a cofactor. The cofactor is Mn(2+). Requires Fe(2+) as cofactor.

Its subcellular location is the cytoplasm. The enzyme catalyses Release of N-terminal amino acids, preferentially methionine, from peptides and arylamides.. Cotranslationally removes the N-terminal methionine from nascent proteins. The N-terminal methionine is often cleaved when the second residue in the primary sequence is small and uncharged (Met-Ala-, Cys, Gly, Pro, Ser, Thr, or Val). The chain is Methionine aminopeptidase 2-2 from Aspergillus fumigatus (strain ATCC MYA-4609 / CBS 101355 / FGSC A1100 / Af293) (Neosartorya fumigata).